The primary structure comprises 39 residues: RapF inhibitor (39 aa).

Residues 1–34 (MKLKSKLLLSCLALSTVFVATTIANAPTHQIEVA) constitute a propeptide that is removed on maturation.

The protein belongs to the Phr family. In terms of assembly, interacts with RapF and inhibits its interaction with ComA. Post-translationally, contains a predicted signal peptide cleavage site in the N-terminal region, however the propeptide is probably subject to only one processing event, at the N-terminal end of the mature peptide.

The protein resides in the secreted. It localises to the cytoplasm. In terms of biological role, signaling molecule involved in the regulation of genetic competence development. Secreted during production, but the mature peptide acts intracellularly, indicating that it needs to be imported into the cell to function. Stimulates expression of the genes controlled by ComA, a transcriptional factor that regulates the development of genetic competence. Acts by inhibiting RapF, which regulates the activity of ComA. In Bacillus subtilis (strain 168), this protein is RapF inhibitor (phrF).